Consider the following 122-residue polypeptide: MIQSFTRLAVADNSGAKELMCIKVLGGSKRRYATVGDVIVASVKKALPNGKVKKGQVVKAVIVRTKKEIHRDNGSLIRFDENAAVILDAKREPIGTRIFGPVGREVRYGGFMKIVSLAPEVL.

The protein belongs to the universal ribosomal protein uL14 family. Part of the 50S ribosomal subunit. Forms a cluster with proteins L3 and L19. In the 70S ribosome, L14 and L19 interact and together make contacts with the 16S rRNA in bridges B5 and B8.

Its function is as follows. Binds to 23S rRNA. Forms part of two intersubunit bridges in the 70S ribosome. The chain is Large ribosomal subunit protein uL14 from Campylobacter lari (strain RM2100 / D67 / ATCC BAA-1060).